Consider the following 161-residue polypeptide: MAENTTTIAFTEEQEALVVKSWNAMKKDSAELSFKFFSKILEIAPPAKQLFSFLRDSEVPLDQNPKLKPHAMSVFLMTCESAAQLRKEGKVTVRESNLKKLGATHFKKGVIPEHFEVTKQALLDTIKEAVPELWSLELKDAWAIAHDQLASAIIAEMKPES.

Residues 9–158 form the Globin domain; sequence AFTEEQEALV…LASAIIAEMK (150 aa). The Homodimerization motif lies at 42–46; it reads EIAPP. Heme b contacts are provided by serine 52, lysine 66, histidine 70, lysine 100, threonine 104, and histidine 105. The short motif at 112-124 is the Homodimerization element; it reads PEHFEVTKQALLD.

It belongs to the plant globin family. As to quaternary structure, homodimer. It depends on heme b as a cofactor. Mainly expressed in root nodules and leaves, and, to a lower extent, in roots, stems, flowers and fruits. Accumulates in mature root nodules.

The catalysed reaction is Fe(III)-heme b-[protein] + nitric oxide + H2O = Fe(II)-heme b-[protein] + nitrite + 2 H(+). Functionally, phytoglobin that reduces nitrite to nitric oxide (NO) under anoxic conditions (e.g. during flooding or in waterlogged soil) and upon root nodulation. Required for general plant development and during nodulation, especially for the onset of symbiosis. Monitors nitric oxide (NO) levels during early phase of the nitrogen-fixing symbiosis and buffers oxygen in functioning nodules. Necessary for the production of pods. May not function as an oxygen storage or transport protein. Has an unusually high affinity for O(2) through a hexacoordinate heme iron because of a very low dissociation constant. The sequence is that of Anaerobic nitrite reductase Glb1-2 from Lotus japonicus (Lotus corniculatus var. japonicus).